A 427-amino-acid polypeptide reads, in one-letter code: Enolase (427 aa).

Glutamine 163 serves as a coordination point for (2R)-2-phosphoglycerate. Glutamate 205 serves as the catalytic Proton donor. Residues aspartate 242, glutamate 285, and aspartate 312 each coordinate Mg(2+). Residues lysine 337, arginine 366, serine 367, and lysine 388 each coordinate (2R)-2-phosphoglycerate. The active-site Proton acceptor is the lysine 337.

The protein belongs to the enolase family. The cofactor is Mg(2+).

It localises to the cytoplasm. The protein resides in the secreted. It is found in the cell surface. The catalysed reaction is (2R)-2-phosphoglycerate = phosphoenolpyruvate + H2O. It participates in carbohydrate degradation; glycolysis; pyruvate from D-glyceraldehyde 3-phosphate: step 4/5. Functionally, catalyzes the reversible conversion of 2-phosphoglycerate (2-PG) into phosphoenolpyruvate (PEP). It is essential for the degradation of carbohydrates via glycolysis. In Bradyrhizobium sp. (strain ORS 278), this protein is Enolase.